The chain runs to 291 residues: MQENLLEKQFLNHPLYTKIQELKALNLTCNFSLDDSVNLSTNSQAKDEILAITKELKPWRKGPFKIDDLFIDTEWQSFIKFNILKPFMNEISQKCVADIGCNNGYYMFKMLEFNPAKLIGFDPSIKYRLQFELINALAKTPIKYELLGVEDLPSYSLKFDVIFCLGVIYHRSDPVKMLKDLKAGLNKNGVVFLDTMYIEDEREIALVPNKTYSKIPNIYFVPSISALKNWCERAGFKEFEVLATKKTDENEQRKTEWIDSFSLENFLDPKDKNLTIEGYEAPKRVYIRIKI.

Residues Lys61, Trp75, Lys80, Gly100, 122 to 124 (DPS), 149 to 150 (VE), Tyr169, and Arg284 contribute to the carboxy-S-adenosyl-L-methionine site.

Belongs to the class I-like SAM-binding methyltransferase superfamily. CmoB family. As to quaternary structure, homotetramer.

The enzyme catalyses carboxy-S-adenosyl-L-methionine + 5-hydroxyuridine(34) in tRNA = 5-carboxymethoxyuridine(34) in tRNA + S-adenosyl-L-homocysteine + H(+). Its function is as follows. Catalyzes carboxymethyl transfer from carboxy-S-adenosyl-L-methionine (Cx-SAM) to 5-hydroxyuridine (ho5U) to form 5-carboxymethoxyuridine (cmo5U) at position 34 in tRNAs. This is tRNA U34 carboxymethyltransferase from Campylobacter jejuni subsp. jejuni serotype O:23/36 (strain 81-176).